The sequence spans 426 residues: D-tagatose-1,6-bisphosphate aldolase subunit KbaZ (426 aa).

This sequence belongs to the GatZ/KbaZ family. KbaZ subfamily. As to quaternary structure, forms a complex with KbaY.

Its pathway is carbohydrate metabolism; D-tagatose 6-phosphate degradation; D-glyceraldehyde 3-phosphate and glycerone phosphate from D-tagatose 6-phosphate: step 2/2. Functionally, component of the tagatose-1,6-bisphosphate aldolase KbaYZ that is required for full activity and stability of the Y subunit. Could have a chaperone-like function for the proper and stable folding of KbaY. When expressed alone, KbaZ does not show any aldolase activity. The polypeptide is D-tagatose-1,6-bisphosphate aldolase subunit KbaZ (Escherichia coli (strain ATCC 8739 / DSM 1576 / NBRC 3972 / NCIMB 8545 / WDCM 00012 / Crooks)).